Consider the following 73-residue polypeptide: UPF0352 protein HD_1515 (73 aa).

The protein belongs to the UPF0352 family.

The sequence is that of UPF0352 protein HD_1515 from Haemophilus ducreyi (strain 35000HP / ATCC 700724).